A 99-amino-acid chain; its full sequence is Probable small ribosomal subunit protein cS23 (99 aa).

The protein belongs to the chloroplast-specific ribosomal protein cS23 family. In terms of assembly, part of the 30S ribosomal subunit.

Its function is as follows. Probably a ribosomal protein or a ribosome-associated protein. The protein is Probable small ribosomal subunit protein cS23 of Synechococcus sp. (strain JA-3-3Ab) (Cyanobacteria bacterium Yellowstone A-Prime).